Reading from the N-terminus, the 218-residue chain is Ribose-5-phosphate isomerase A (218 aa).

Substrate is bound by residues Thr-28–Thr-31, Asp-81–Asp-84, and Lys-94–Gly-97. Glu-103 serves as the catalytic Proton acceptor. Lys-121 lines the substrate pocket.

It belongs to the ribose 5-phosphate isomerase family. Homodimer.

It carries out the reaction aldehydo-D-ribose 5-phosphate = D-ribulose 5-phosphate. The protein operates within carbohydrate degradation; pentose phosphate pathway; D-ribose 5-phosphate from D-ribulose 5-phosphate (non-oxidative stage): step 1/1. Functionally, catalyzes the reversible conversion of ribose-5-phosphate to ribulose 5-phosphate. The protein is Ribose-5-phosphate isomerase A of Blochmanniella pennsylvanica (strain BPEN).